Here is a 1984-residue protein sequence, read N- to C-terminus: Sodium channel protein type 9 subunit alpha (1984 aa).

Residues 1 to 125 (MAMLPPPGPQ…RRISIKILVH (125 aa)) lie on the Cytoplasmic side of the membrane. Positions 26–39 (RISEEKAKEHKDEK) are enriched in basic and acidic residues. A disordered region spans residues 26–55 (RISEEKAKEHKDEKKDDEEEGPKPSSDLEA). An I repeat occupies 112-410 (FSPLRRISIK…VAMAYEEQNQ (299 aa)). A helical transmembrane segment spans residues 126–145 (SLFSMLIMCTILTNCIFMTL). Topologically, residues 146-150 (SNPPE) are extracellular. The chain crosses the membrane as a helical span at residues 151 to 172 (WTKNVEYTFTGIYTFESLIKIL). At 173 to 185 (ARGFCVGEFTFLR) the chain is on the cytoplasmic side. Residues 186–204 (DPWNWLDFVVIVFAYLTEF) traverse the membrane as a helical segment. At 205–210 (VNLGNV) the chain is on the extracellular side. N-linked (GlcNAc...) asparagine glycosylation occurs at Asn209. Residues 211-227 (SALRTFRVLRALKTISV) traverse the membrane as a helical segment. Over 228 to 241 (IPGLKTIVGALIQS) the chain is Cytoplasmic. Residues 242–267 (VKKLSDVMILTVFCLSVFALIGLQLF) traverse the membrane as a helical segment. The Extracellular segment spans residues 268–346 (MGNLKHKCFR…PDYGYTSFDT (79 aa)). Residues Cys275 and Cys324 are joined by a disulfide bond. Asn283 is a glycosylation site (N-linked (GlcNAc...) asparagine). An intramembrane region (pore-forming) is located at residues 347 to 363 (FSWAFLALFRLMTQDYW). The Extracellular segment spans residues 364–376 (ENLYQQTLRAAGK). A helical transmembrane segment spans residues 377 to 402 (TYMIFFVVVIFLGSFYLINLILAVVA). Topologically, residues 403 to 744 (MAYEEQNQAN…LIYFIVMDPF (342 aa)) are cytoplasmic. Positions 461-471 (SSSETSRLSSK) are enriched in low complexity. 2 disordered regions span residues 461–542 (SSSE…RGSL) and 576–609 (IFGD…RSPP). Basic residues predominate over residues 474–486 (KERRNRRKKKKQK). Positions 489–509 (SGEEKGDDEKLSKSGSEESIR) are enriched in basic and acidic residues. The stretch at 725 to 988 (CSPYWIKFKK…EEDTDANNLQ (264 aa)) is one II repeat. Residues 745–761 (VDLAITICIVLNTLFMA) traverse the membrane as a helical segment. The Extracellular portion of the chain corresponds to 762–770 (MEHHPMTEE). The helical transmembrane segment at 771-795 (FKNVLAVGNLIFTGIFAAEMVLKLI) threads the bilayer. At 796-804 (AMDPYEYFQ) the chain is on the cytoplasmic side. Residues 805–821 (VGWNIFDSLIVTLSLIE) traverse the membrane as a helical segment. At 822–830 (LFLADVEGL) the chain is on the extracellular side. A helical transmembrane segment spans residues 831–847 (SVLRSFRLLRVFKLAKS). Residues 848 to 864 (WPTLNMLIKIIGNSVGA) are Cytoplasmic-facing. Residues 865–887 (LGNLTLVLAIIVFIFAVVGMQLF) traverse the membrane as a helical segment. Residues 888-914 (GKSYKECVCKINVDCKLPRWHMNDFFH) are Extracellular-facing. Residues Cys896 and Cys902 are joined by a disulfide bond. Residues 915–927 (SFLIVFRVLCGEW) constitute an intramembrane region (pore-forming). The Extracellular portion of the chain corresponds to 928-939 (IETMWDCMEVAG). A disulfide bridge connects residues Cys934 and Cys943. Residues 940–966 (QTMCLIVYMMVMVIGNLVVLNLFLALL) form a helical membrane-spanning segment. The Cytoplasmic portion of the chain corresponds to 967–1185 (LSSFSSDNLT…WWTIRKTCYR (219 aa)). Disordered stretches follow at residues 1015–1040 (KKPK…ISNR) and 1103–1145 (EELS…EPVN). Positions 1019-1035 (GSKDTKRTADPNNKKEN) are enriched in basic and acidic residues. The span at 1135–1145 (GEEEAEAEPVN) shows a compositional bias: acidic residues. The III repeat unit spans residues 1178–1486 (TIRKTCYRIV…KKYYNAMKKL (309 aa)). Residues 1186–1210 (IVEHSWFESFIVLMILLSSGALAFE) form a helical membrane-spanning segment. Topologically, residues 1211–1222 (DIYIEKKKTIKI) are extracellular. A helical transmembrane segment spans residues 1223–1248 (ILEYADKIFTYIFILEMLLKWVAYGY). The Cytoplasmic portion of the chain corresponds to 1249-1250 (KT). The chain crosses the membrane as a helical span at residues 1251 to 1276 (YFTNAWCWLDFLIVDVSLVTLVANTL). The Extracellular segment spans residues 1277–1285 (GYSDLGPIK). A helical transmembrane segment spans residues 1286–1302 (SLRTLRALRPLRALSRF). The Cytoplasmic segment spans residues 1303–1315 (EGMRVVVNALIGA). Residues 1316 to 1340 (IPSIMNVLLVCLIFWLIFSIMGVNL) form a helical membrane-spanning segment. Topologically, residues 1341-1392 (FAGKFYECVNTTDGSRFPTSQVANRSECFALMNVSGNVRWKNLKVNFDNVGL) are extracellular. Cys1348 and Cys1368 are oxidised to a cystine. N-linked (GlcNAc...) asparagine glycosylation is found at Asn1350, Asn1364, and Asn1373. The segment at residues 1393–1403 (GYLSLLQVATF) is an intramembrane region (pore-forming). At 1404–1429 (KGWMDIMYAAVDSVNVNEQPKYEYSL) the chain is on the extracellular side. Residues 1430-1455 (YMYIYFVIFIIFGSFFTLNLFIGVII) form a helical membrane-spanning segment. The Cytoplasmic portion of the chain corresponds to 1456 to 1512 (DNFNQQKKKLGGQDIFMTEEQKKYYNAMKKLGSKKPQKPIPRPGNKFQGCIFDLVTN). A Phosphoserine; by PKC modification is found at Ser1488. An IV repeat occupies 1495–1793 (IPRPGNKFQG…WEKFDPDATQ (299 aa)). A helical transmembrane segment spans residues 1513–1532 (QAFDITIMVLICLNMVTMMV). The Extracellular portion of the chain corresponds to 1533-1543 (EKEGQTEYMDY). Residues 1544–1565 (VLHWINMVFIILFTGECVLKLI) traverse the membrane as a helical segment. Residues 1566–1574 (SLRHYYFTV) lie on the Cytoplasmic side of the membrane. The chain crosses the membrane as a helical span at residues 1575-1596 (GWNIFDFVVVILSIVGMFLAEM). Residues 1597–1605 (IEKYFVSPT) lie on the Extracellular side of the membrane. The chain crosses the membrane as a helical span at residues 1606 to 1625 (LFRVIRLARIGRILRLIKGA). Over 1626 to 1638 (KGIRTLLFALMMS) the chain is Cytoplasmic. The helical transmembrane segment at 1639-1661 (LPALFNIGLLLFLVMFIYAIFGM) threads the bilayer. Residues 1662–1684 (SNFAYVKKEAGINDMFNFETFGN) lie on the Extracellular side of the membrane. The pore-forming intramembrane region spans 1685–1697 (SMICLFQITTSAG). Topologically, residues 1698–1731 (WDGLLAPILNSAPPDCDPKKVHPGSSVEGDCGNP) are extracellular. Cys1713 and Cys1728 are oxidised to a cystine. Residues 1732-1757 (SVGIFYFVSYIIISFLVVVNMYIAVI) traverse the membrane as a helical segment. Topologically, residues 1758-1984 (LENFSVATEE…EDKEKDESRK (227 aa)) are cytoplasmic. The IQ domain occupies 1887 to 1916 (EEVSATIIQRAYRRYRLRQHVKNISSIYIK). Residues 1916 to 1930 (KDGDRDDDLPNKEDT) show a composition bias toward basic and acidic residues. Positions 1916–1984 (KDGDRDDDLP…EDKEKDESRK (69 aa)) are disordered. Polar residues predominate over residues 1946-1958 (VTASTISPPSYDS). The span at 1960-1984 (TKPDQEKYETDKTEKEDKEKDESRK) shows a compositional bias: basic and acidic residues.

It belongs to the sodium channel (TC 1.A.1.10) family. Nav1.7/SCN9A subfamily. The Nav1.7 voltage-gated sodium channel consists of an ion-conducting alpha subunit SCN9A which is functional on its own regulated by one or more beta-1 (SCN1B), beta-2 (SCN2B), beta-3 (SCN3B) and beta-4 (SCN4B) subunits. SCN1B and SCN3B are non-covalently associated with SCN9A. SCN2B and SCN4B are disulfide-linked to SCN9A. SCN1B regulates channel inactivation. Interacts with NEDD4 and NEDD4L; regulates Nav1.7 activity most probably through ubiquitination and subsequent endocytosis. Interacts with TMEM233; modulates the gating properties of NaV1.7. Post-translationally, phosphorylation at Ser-1488 by PKC in a highly conserved cytoplasmic loop increases peak sodium currents. Ubiquitinated by NEDD4L; which may promote its endocytosis. Does not seem to be ubiquitinated by NEDD4. In terms of processing, ubiquitinated by NEDD4L; which may promote its endocytosis. In terms of tissue distribution, expressed at high level in the dorsal root ganglion and at much lower levels in the brain, sciatic nerve, nodose ganglia, heart, thyroid and adrenal glands and Schwann cells, but not in the cardiac and skeletal muscles, brain and liver.

Its subcellular location is the cell membrane. The protein localises to the cell projection. It is found in the neuron projection. The protein resides in the axon. It carries out the reaction Na(+)(in) = Na(+)(out). With respect to regulation, inhibited by the conotoxin GVIIJ. Pore-forming subunit of Nav1.7, a voltage-gated sodium (Nav) channel that directly mediates the depolarizing phase of action potentials in excitable membranes. Navs, also called VGSCs (voltage-gated sodium channels) or VDSCs (voltage-dependent sodium channels), operate by switching between closed and open conformations depending on the voltage difference across the membrane. In the open conformation they allow Na(+) ions to selectively pass through the pore, along their electrochemical gradient. The influx of Na(+) ions provokes membrane depolarization, initiating the propagation of electrical signals throughout cells and tissues. Nav1.7 plays a crucial role in controlling the excitability and action potential propagation from nociceptor neurons, thereby contributing to the sensory perception of pain. In Rattus norvegicus (Rat), this protein is Sodium channel protein type 9 subunit alpha.